Here is a 146-residue protein sequence, read N- to C-terminus: Hemoglobin subunit beta (146 aa).

Position 1 is an N-acetylvaline (Val-1). Positions 2–146 constitute a Globin domain; the sequence is HLTADEKSAV…VATALGHKYH (145 aa). Residue Thr-12 is modified to Phosphothreonine. The residue at position 44 (Ser-44) is a Phosphoserine. The residue at position 59 (Lys-59) is an N6-acetyllysine. His-63 is a heme b binding site. Lys-82 is modified (N6-acetyllysine). His-92 provides a ligand contact to heme b. Cys-93 carries the post-translational modification S-nitrosocysteine. The residue at position 144 (Lys-144) is an N6-acetyllysine.

It belongs to the globin family. In terms of assembly, heterotetramer of two alpha chains and two beta chains. As to expression, red blood cells.

Its function is as follows. Involved in oxygen transport from the lung to the various peripheral tissues. The protein is Hemoglobin subunit beta (HBB) of Antrozous pallidus (Pallid bat).